Reading from the N-terminus, the 291-residue chain is MEMO1 family protein PH1626 (291 aa).

This sequence belongs to the MEMO1 family.

The chain is MEMO1 family protein PH1626 from Pyrococcus horikoshii (strain ATCC 700860 / DSM 12428 / JCM 9974 / NBRC 100139 / OT-3).